We begin with the raw amino-acid sequence, 379 residues long: MEKYEKLAKTGEGSYGVVFKCRNKTSGQVVAVKKFVESEDDPVVKKIALREIRMLKQLKHPNLVNLIEVFRRKRKMHLVFEYCDHTLLNELERNPNGVADGVIKSVLWQTLQALNFCHIHNCIHRDIKPENILITKQGIIKICDFGFAQILIPGDAYTDYVATRWYRAPELLVGDTQYGSSVDIWAIGCVFAELLTGQPLWPGKSDVDQLYLIIRTLGKLIPRHQSIFKSNGFFHGISIPEPEDMETLEEKFSDVHPVALNFMKGCLKMNPDDRLTCSQLLESSYFDSFQEAQIKRKARNEGRNRRRQQQAPKSAFPRLFLKTKICQVQRNETQTSGNQILPNGPILQNSMVTVMTNINSAVYQVTVLHLLSENFEVKS.

In terms of domain architecture, Protein kinase spans 4 to 286 (YEKLAKTGEG…CSQLLESSYF (283 aa)). ATP is bound by residues 10–18 (TGEGSYGVV) and K33. The short motif at 45–51 (KKIALRE) is the [NKR]KIAxRE element. The active-site Proton acceptor is D126.

Belongs to the protein kinase superfamily. CMGC Ser/Thr protein kinase family. CDC2/CDKX subfamily.

Its subcellular location is the cytoplasm. The enzyme catalyses L-seryl-[protein] + ATP = O-phospho-L-seryl-[protein] + ADP + H(+). The catalysed reaction is L-threonyl-[protein] + ATP = O-phospho-L-threonyl-[protein] + ADP + H(+). This is Cyclin-dependent kinase-like 4 (CDKL4) from Homo sapiens (Human).